A 350-amino-acid polypeptide reads, in one-letter code: 2-oxoglutarate and iron-dependent oxygenase domain-containing protein 2 (350 aa).

The region spanning 215 to 309 is the Fe2OG dioxygenase domain; sequence DSHRAFVVKY…RWNLVVWLRA (95 aa). The Fe cation site is built by H235, D237, and H290. R300 contacts 2-oxoglutarate.

Belongs to the OGFOD2 family. The cofactor is Fe(2+). Requires L-ascorbate as cofactor.

This chain is 2-oxoglutarate and iron-dependent oxygenase domain-containing protein 2 (OGFOD2), found in Homo sapiens (Human).